A 363-amino-acid polypeptide reads, in one-letter code: MPHSYPALSAEQKKELSDIALRIVTPGKGILAADESVGSMAKRLSQIGVENTEENRRLYRQVLFSADDRVKKCIGGVIFFHETLYQKDDNGVPFVRTIQDKGILVGIKVDKGVVPLAGTDGETTTQGLDGLLERCAQYKKDGADFAKWRCVLKISDRTPSALAILENANVLARYASICQQNGIVPIVEPEILPDGDHDLKRCQYVTEKVLAAVYKALSDHHVYLEGTLLKPNMVTPGHACPIKYSPEEIAMATVTALRRTVPPAVPGVTFLSGGQSEEEASLNLNAINRCPLPRPWALTFSYGRALQASALNAWRGQRDNAGAATEEFIKRAEMNGLAAQGRYEGSGDGGAAAQSLYIANHAY.

Position 5 is a phosphotyrosine (tyrosine 5). 3 positions are modified to phosphoserine: serine 36, serine 39, and serine 45. Arginine 56 lines the substrate pocket. An N6-acetyllysine modification is found at lysine 111. Residue lysine 147 coordinates substrate. The active-site Proton acceptor is glutamate 188. Lysine 230 acts as the Schiff-base intermediate with dihydroxyacetone-P in catalysis.

Belongs to the class I fructose-bisphosphate aldolase family. As to quaternary structure, homotetramer. Interacts with ATP6V1E1. In terms of tissue distribution, expressed exclusively in Purkinje cells in bands running from anterior to posterior across most of the cerebellum. Expressed at higher levels in the brains of BSE-infected animals.

The catalysed reaction is beta-D-fructose 1,6-bisphosphate = D-glyceraldehyde 3-phosphate + dihydroxyacetone phosphate. It participates in carbohydrate degradation; glycolysis; D-glyceraldehyde 3-phosphate and glycerone phosphate from D-glucose: step 4/4. In Mus musculus (Mouse), this protein is Fructose-bisphosphate aldolase C (Aldoc).